The chain runs to 452 residues: Phosphoglucosamine mutase (452 aa).

S108 serves as the catalytic Phosphoserine intermediate. Mg(2+) is bound by residues S108, D247, D249, and D251. The residue at position 108 (S108) is a Phosphoserine.

This sequence belongs to the phosphohexose mutase family. It depends on Mg(2+) as a cofactor. In terms of processing, activated by phosphorylation.

The enzyme catalyses alpha-D-glucosamine 1-phosphate = D-glucosamine 6-phosphate. Functionally, catalyzes the conversion of glucosamine-6-phosphate to glucosamine-1-phosphate. The chain is Phosphoglucosamine mutase from Paraburkholderia xenovorans (strain LB400).